Here is a 264-residue protein sequence, read N- to C-terminus: 3-methyl-2-oxobutanoate hydroxymethyltransferase (264 aa).

Asp45 and Asp84 together coordinate Mg(2+). Residues Asp45–Ser46, Asp84, and Lys112 each bind 3-methyl-2-oxobutanoate. Glu114 serves as a coordination point for Mg(2+). Glu181 acts as the Proton acceptor in catalysis.

It belongs to the PanB family. Homodecamer; pentamer of dimers. Requires Mg(2+) as cofactor.

Its subcellular location is the cytoplasm. The enzyme catalyses 3-methyl-2-oxobutanoate + (6R)-5,10-methylene-5,6,7,8-tetrahydrofolate + H2O = 2-dehydropantoate + (6S)-5,6,7,8-tetrahydrofolate. Its pathway is cofactor biosynthesis; (R)-pantothenate biosynthesis; (R)-pantoate from 3-methyl-2-oxobutanoate: step 1/2. Functionally, catalyzes the reversible reaction in which hydroxymethyl group from 5,10-methylenetetrahydrofolate is transferred onto alpha-ketoisovalerate to form ketopantoate. The polypeptide is 3-methyl-2-oxobutanoate hydroxymethyltransferase (Shigella boydii serotype 18 (strain CDC 3083-94 / BS512)).